The sequence spans 1040 residues: Multidrug resistance protein MdtB (1040 aa).

12 helical membrane-spanning segments follow: residues 25–45 (LLMV…PVAA), 342–362 (DTQF…YLFL), 369–389 (IIPG…MVFL), 396–416 (LTLM…IVVI), 440–460 (IGFT…PLLF), 472–492 (FAVT…TLTP), 537–557 (WLTL…WVFI), 863–883 (LGST…VLGV), 888–908 (FIHP…ALLA), 911–931 (IAGS…IGIV), 967–987 (PILM…LSTG), and 998–1018 (IGMV…TPVI).

It belongs to the resistance-nodulation-cell division (RND) (TC 2.A.6) family. MdtB subfamily. As to quaternary structure, part of a tripartite efflux system composed of MdtA, MdtB and MdtC. MdtB forms a heteromultimer with MdtC.

The protein resides in the cell inner membrane. The protein is Multidrug resistance protein MdtB of Citrobacter koseri (strain ATCC BAA-895 / CDC 4225-83 / SGSC4696).